A 504-amino-acid chain; its full sequence is Maturase K (504 aa).

The protein belongs to the intron maturase 2 family. MatK subfamily.

It is found in the plastid. Its subcellular location is the chloroplast. Functionally, usually encoded in the trnK tRNA gene intron. Probably assists in splicing its own and other chloroplast group II introns. The protein is Maturase K of Hamamelis mollis (Chinese witch hazel).